The primary structure comprises 1335 residues: Probable serine/threonine-protein kinase ndrC (1335 aa).

Disordered stretches follow at residues 1–70, 85–158, 276–447, and 462–603; these read MSRK…KKGS, VDTH…LIPS, LPPP…SPLN, and TTTT…NNNK. A compositionally biased stretch (polar residues) spans 8–17; the sequence is NRSSSSNSIE. A compositionally biased stretch (low complexity) spans 27–41; sequence SNISNSSNINCNNSS. Residues 55-70 show a composition bias toward basic residues; that stretch reads RSKHSSPIHSLKKKGS. Residues 89-117 show a composition bias toward low complexity; the sequence is SSSNSNNNSSSNNNNNNNNHNINSSSESS. Residues 118–132 are compositionally biased toward polar residues; the sequence is TPTTPRSSFTPQVTM. Low complexity predominate over residues 133-153; the sequence is NSNQSSGNNSPQLSSRSSSQS. Positions 276-288 are enriched in pro residues; sequence LPPPSQQQLPPPQ. Low complexity-rich tracts occupy residues 289–331, 345–368, 382–396, 412–424, 437–447, and 462–484; these read SHQQ…TPQS, NQQQIQSSQSTTPTNSSQKSSPNK, SPSPSSPSSPSSPSS, PTPLIITPSSPSS, PSSFSGGSPLN, and TTTTTTTTTTSSSSSLSVTTTIS. The segment covering 485 to 497 has biased composition (polar residues); that stretch reads NPNYTQNLPTTPL. Low complexity predominate over residues 498–507; that stretch reads SNSSSNNNNN. A compositionally biased stretch (polar residues) spans 508–528; it reads GSFITLQDTTNNKSIINNNRE. A compositionally biased stretch (low complexity) spans 540-566; the sequence is SSGSSNTTSSTTNTTTPSSSSLTTSSG. Over residues 567–581 the composition is skewed to basic and acidic residues; the sequence is KESRDRDSKDKEKDL. The span at 586 to 602 shows a compositional bias: low complexity; that stretch reads NNNNNNNNNNNNNNNNN. Residues 586 to 613 adopt a coiled-coil conformation; sequence NNNNNNNNNNNNNNNNNKVEKEKENYCK. A Protein kinase domain is found at 718–1019; it reads FKILTQIGKG…KQDFKNHPFF (302 aa). ATP contacts are provided by residues 724-732 and Lys-747; that span reads IGKGGFGQV. Asp-840 (proton acceptor) is an active-site residue. The region spanning 1020–1106 is the AGC-kinase C-terminal domain; sequence KNHNWDEIVN…RKSSALSLSM (87 aa). Residues 1239–1284 are compositionally biased toward low complexity; the sequence is SQSQPSLANQLQSSSSSPSPSLQSQSQSPSLQSSSKSTPNLSSSLL. Positions 1239 to 1313 are disordered; the sequence is SQSQPSLANQ…IKKENESEEI (75 aa). Residues 1287-1313 show a composition bias toward basic and acidic residues; it reads PVKEELEYKNQTENEVEIKKENESEEI. Residues 1289–1325 adopt a coiled-coil conformation; it reads KEELEYKNQTENEVEIKKENESEEIQSLRDQLKEIII.

Belongs to the protein kinase superfamily. AGC Ser/Thr protein kinase family.

It catalyses the reaction L-seryl-[protein] + ATP = O-phospho-L-seryl-[protein] + ADP + H(+). The catalysed reaction is L-threonyl-[protein] + ATP = O-phospho-L-threonyl-[protein] + ADP + H(+). This chain is Probable serine/threonine-protein kinase ndrC (ndrC), found in Dictyostelium discoideum (Social amoeba).